Reading from the N-terminus, the 278-residue chain is Undecaprenyl-diphosphatase 3 (278 aa).

6 consecutive transmembrane segments (helical) span residues 42–62 (DITA…LLYF), 88–108 (YRFG…GVAF), 119–139 (LWFV…ADHV), 187–207 (VAVT…AAAL), 224–244 (ATII…AWLL), and 254–274 (VFIG…ATGI).

The protein belongs to the UppP family.

The protein localises to the cell membrane. The catalysed reaction is di-trans,octa-cis-undecaprenyl diphosphate + H2O = di-trans,octa-cis-undecaprenyl phosphate + phosphate + H(+). In terms of biological role, catalyzes the dephosphorylation of undecaprenyl diphosphate (UPP). Confers resistance to bacitracin. In Frankia casuarinae (strain DSM 45818 / CECT 9043 / HFP020203 / CcI3), this protein is Undecaprenyl-diphosphatase 3.